The sequence spans 254 residues: Ribosomal RNA small subunit methyltransferase J (254 aa).

S-adenosyl-L-methionine contacts are provided by residues R101–D102, E117–R118, S153–S154, and D171.

It belongs to the methyltransferase superfamily. RsmJ family.

The protein resides in the cytoplasm. The enzyme catalyses guanosine(1516) in 16S rRNA + S-adenosyl-L-methionine = N(2)-methylguanosine(1516) in 16S rRNA + S-adenosyl-L-homocysteine + H(+). Functionally, specifically methylates the guanosine in position 1516 of 16S rRNA. The polypeptide is Ribosomal RNA small subunit methyltransferase J (Enterobacter sp. (strain 638)).